The following is a 709-amino-acid chain: Anillin-like protein 3 (709 aa).

Positions 584 to 705 (DMEYRGFLHI…WLSAINDTLD (122 aa)) constitute a PH domain.

This Caenorhabditis elegans protein is Anillin-like protein 3 (ani-3).